A 212-amino-acid chain; its full sequence is 3-isopropylmalate dehydratase small subunit (212 aa).

This sequence belongs to the LeuD family. LeuD type 1 subfamily. In terms of assembly, heterodimer of LeuC and LeuD.

The catalysed reaction is (2R,3S)-3-isopropylmalate = (2S)-2-isopropylmalate. It participates in amino-acid biosynthesis; L-leucine biosynthesis; L-leucine from 3-methyl-2-oxobutanoate: step 2/4. Functionally, catalyzes the isomerization between 2-isopropylmalate and 3-isopropylmalate, via the formation of 2-isopropylmaleate. This chain is 3-isopropylmalate dehydratase small subunit, found in Methylococcus capsulatus (strain ATCC 33009 / NCIMB 11132 / Bath).